The primary structure comprises 327 residues: 2-oxoisovalerate dehydrogenase subunit beta (327 aa).

Residues E29, 58–60 (LAE), Q82, and 86–89 (FIMP) contribute to the thiamine diphosphate site. Residues 83–86 (FADF) and H129 each bind substrate. H129 serves as the catalytic Proton acceptor.

In terms of assembly, heterotetramer of two alpha and two beta chains. Directly associated with ODBA in the E1 complex. It depends on thiamine diphosphate as a cofactor.

It carries out the reaction N(6)-[(R)-lipoyl]-L-lysyl-[protein] + 3-methyl-2-oxobutanoate + H(+) = N(6)-[(R)-S(8)-2-methylpropanoyldihydrolipoyl]-L-lysyl-[protein] + CO2. Its function is as follows. The branched-chain alpha-keto dehydrogenase complex catalyzes the overall conversion of alpha-keto acids to acyl-CoA and CO(2). It contains multiple copies of three enzymatic components: branched-chain alpha-keto acid decarboxylase (E1), lipoamide acyltransferase (E2) and lipoamide dehydrogenase (E3). The polypeptide is 2-oxoisovalerate dehydrogenase subunit beta (bfmBAB) (Bacillus subtilis (strain 168)).